We begin with the raw amino-acid sequence, 527 residues long: UPF0053 protein YegH (527 aa).

Transmembrane regions (helical) follow at residues 14–34, 51–71, 81–101, 145–165, and 185–205; these read ITLIVIELVLGIDNLVFIAIL, LLLAMLMRLLLLASISWLVTL, FTFSARDLIMLFGGFFLLFKA, ITAVGMVDHLLVMMAAVVIAI, and IVILCLSFLLMIGFSLVAEGF. CBS domains lie at 306–366 and 371–429; these read MTSR…GEPL and LIRQ…PNEV.

Belongs to the UPF0053 family.

It localises to the cell membrane. In Escherichia coli (strain K12), this protein is UPF0053 protein YegH (yegH).